Here is a 550-residue protein sequence, read N- to C-terminus: 2-succinyl-5-enolpyruvyl-6-hydroxy-3-cyclohexene-1-carboxylate synthase (550 aa).

Belongs to the TPP enzyme family. MenD subfamily. Homodimer. It depends on Mg(2+) as a cofactor. The cofactor is Mn(2+). Thiamine diphosphate is required as a cofactor.

The enzyme catalyses isochorismate + 2-oxoglutarate + H(+) = 5-enolpyruvoyl-6-hydroxy-2-succinyl-cyclohex-3-ene-1-carboxylate + CO2. It participates in quinol/quinone metabolism; 1,4-dihydroxy-2-naphthoate biosynthesis; 1,4-dihydroxy-2-naphthoate from chorismate: step 2/7. The protein operates within quinol/quinone metabolism; menaquinone biosynthesis. Catalyzes the thiamine diphosphate-dependent decarboxylation of 2-oxoglutarate and the subsequent addition of the resulting succinic semialdehyde-thiamine pyrophosphate anion to isochorismate to yield 2-succinyl-5-enolpyruvyl-6-hydroxy-3-cyclohexene-1-carboxylate (SEPHCHC). The chain is 2-succinyl-5-enolpyruvyl-6-hydroxy-3-cyclohexene-1-carboxylate synthase from Desulfitobacterium hafniense (strain DSM 10664 / DCB-2).